We begin with the raw amino-acid sequence, 395 residues long: Secreted aspartyl protease 1 (395 aa).

An N-terminal signal peptide occupies residues 1 to 20 (MQLSIQAIIGFVVAAGLAVA). A propeptide spans 21 to 88 (SELPSPMTVN…HLLLDLIDKR (68 aa)) (removed in mature form). Residue Asn41 is glycosylated (N-linked (GlcNAc...) asparagine). The Peptidase A1 domain maps to 105–391 (WAGDVQFGQS…DMGKNRMGFA (287 aa)). Residues Asp121 and Asp283 contribute to the active site. An intrachain disulfide couples Cys321 to Cys352.

This sequence belongs to the peptidase A1 family.

It localises to the secreted. Its activity is regulated as follows. Inhibited by pepstatin A. Dominant secreted aspartyl protease that has a clear preference for aromatic residues in the P1' position directly adjacent to the cleavage site and, in particular, Trp. In addition, it generally cleaves peptides containing Lys, Arg, Phe, Tyr, or Nle (norleucine) in the P1 position, Nle and Glu at P2, and Arg and Val at P2'. Has important roles in facilitating the interaction of the yeast with the external environment. Is able to rapidly hydrolyze Staphylococcus aureus protein A, an important S.aureus virulence factor involved in immune evasion and biofilm formation. Shows anti-biofilm properties and thus plays a role in inter-kingdom interactions, beneficial for host skin health. This chain is Secreted aspartyl protease 1, found in Malassezia globosa (strain ATCC MYA-4612 / CBS 7966) (Dandruff-associated fungus).